The sequence spans 629 residues: MNATRAEYPLASLYIGDLHPDVTEAMLYEKFSPAGPIMSIRVCRDIATRRSLGYAYINFQQPADAERALDTMNFEVIKGRPIRIMWSQRDPGLRKSGVGNVFIKNLDDSIDNKALYDTFSAFGDILSCKVVCDEYGSRGYGFVHFETQEAANRAIQTMNGMLLNDRKVFVGHFKSRRERELEYGAKVMEFTNVYIKNFGEDMDDKRLKEIFSAFGNTLSVKVMMDNSGRSRGFGFVNYGNHEEAQKAVTEMNGKEVNGRMVYVGRAQKRIERQGELKRKFEQIKQERINRYQGVNLYVKNLDDGIDDDRLRKEFSPYGTITSTKVMTEGGHSKGFGFVCFSSPEEATKAVTEMNGRIVSTKPLYVALAQRKEERKAILTNQYMQRLATMRAMPGPLLGSFQQPANYFLPTMPQPSNRAFYSPNPVAPVRPAPQWASHQSRPPQYQPPAPLMRAVPPRRMHSNISTMKQASTQVPRVPLQSQRVANIGTQTAGARAQVNASIMRAMPHYKYSCGVRNVQPIGSSAHLQQVLEPAVLMQGQEPLTASLLAAAPLQEQKQILGERIYPLIHEMHPTLAGKITGMLLEIDNSELLHMLESPESLHSKVEEAVAVLQAHQAKESAPKSAPQSLI.

RRM domains follow at residues 11–89, 99–175, 191–268, and 294–370; these read ASLY…WSQR, GNVF…HFKS, TNVY…RAQK, and VNLY…LAQR. In terms of domain architecture, PABC spans 539–616; the sequence is QEPLTASLLA…AVAVLQAHQA (78 aa).

This sequence belongs to the polyadenylate-binding protein type-1 family. In terms of assembly, interacts with dazl in an RNA-independent manner. The C-terminus can self-associate and also interact with the C-terminus of pabpc1, independently of RNA. RRM 1 and RRM 2 interact with both eif4g1 and paip1, and the C-terminus also interacts with paip1. Prior to oocyte maturation, found in a complex with dazl and pum2 proteins and spdy1 mRNA; pum2 dissociates from the complex during maturation. Interacts with the translation termination factor sup35/erf3.

It is found in the cytoplasm. In terms of biological role, binds and protects the poly(A) tail of mRNA with or without an AU-rich element (ARE) and prevents mRNA deadenylation. Stimulates the translation of mRNAs to which it is bound during early development. This is Embryonic polyadenylate-binding protein B (epabp-b) from Xenopus laevis (African clawed frog).